Here is a 253-residue protein sequence, read N- to C-terminus: 5'/3'-nucleotidase SurE (253 aa).

A divalent metal cation is bound by residues Asp-8, Asp-9, Ser-39, and Asn-92.

It belongs to the SurE nucleotidase family. A divalent metal cation serves as cofactor.

It is found in the cytoplasm. The enzyme catalyses a ribonucleoside 5'-phosphate + H2O = a ribonucleoside + phosphate. The catalysed reaction is a ribonucleoside 3'-phosphate + H2O = a ribonucleoside + phosphate. It catalyses the reaction [phosphate](n) + H2O = [phosphate](n-1) + phosphate + H(+). In terms of biological role, nucleotidase with a broad substrate specificity as it can dephosphorylate various ribo- and deoxyribonucleoside 5'-monophosphates and ribonucleoside 3'-monophosphates with highest affinity to 3'-AMP. Also hydrolyzes polyphosphate (exopolyphosphatase activity) with the preference for short-chain-length substrates (P20-25). Might be involved in the regulation of dNTP and NTP pools, and in the turnover of 3'-mononucleotides produced by numerous intracellular RNases (T1, T2, and F) during the degradation of various RNAs. The chain is 5'/3'-nucleotidase SurE from Enterobacter sp. (strain 638).